A 214-amino-acid polypeptide reads, in one-letter code: Adenylate kinase (214 aa).

10–15 (GAGKGT) contributes to the ATP binding site. Residues 30–59 (STGDMLRAAIKAGTELGKQAKAVIDAGQLV) are NMP. Residues Thr31, Arg36, 57–59 (QLV), 85–88 (GFPR), and Gln92 contribute to the AMP site. An LID region spans residues 122 to 159 (GRRAHLPSGRTYHVVYNPPKVEGKDDVTGEDLVVRDDD). ATP contacts are provided by residues Arg123 and 132–133 (TY). AMP is bound by residues Arg156 and Arg167. Lys200 lines the ATP pocket.

The protein belongs to the adenylate kinase family. In terms of assembly, monomer.

Its subcellular location is the cytoplasm. It carries out the reaction AMP + ATP = 2 ADP. It participates in purine metabolism; AMP biosynthesis via salvage pathway; AMP from ADP: step 1/1. Functionally, catalyzes the reversible transfer of the terminal phosphate group between ATP and AMP. Plays an important role in cellular energy homeostasis and in adenine nucleotide metabolism. In Vibrio vulnificus (strain YJ016), this protein is Adenylate kinase.